We begin with the raw amino-acid sequence, 302 residues long: tRNA-cytidine(32) 2-sulfurtransferase (302 aa).

Residues 45 to 50 carry the PP-loop motif motif; it reads SGGKDS. 3 residues coordinate [4Fe-4S] cluster: Cys-120, Cys-123, and Cys-211.

This sequence belongs to the TtcA family. Homodimer. It depends on Mg(2+) as a cofactor. Requires [4Fe-4S] cluster as cofactor.

It is found in the cytoplasm. The catalysed reaction is cytidine(32) in tRNA + S-sulfanyl-L-cysteinyl-[cysteine desulfurase] + AH2 + ATP = 2-thiocytidine(32) in tRNA + L-cysteinyl-[cysteine desulfurase] + A + AMP + diphosphate + H(+). It functions in the pathway tRNA modification. In terms of biological role, catalyzes the ATP-dependent 2-thiolation of cytidine in position 32 of tRNA, to form 2-thiocytidine (s(2)C32). The sulfur atoms are provided by the cysteine/cysteine desulfurase (IscS) system. The sequence is that of tRNA-cytidine(32) 2-sulfurtransferase from Aeromonas salmonicida (strain A449).